The chain runs to 186 residues: Ribosome-recycling factor (186 aa).

The interval 144-163 is disordered; it reads EKDGVIGQDESRAQSERVQK.

It belongs to the RRF family.

The protein localises to the cytoplasm. In terms of biological role, responsible for the release of ribosomes from messenger RNA at the termination of protein biosynthesis. May increase the efficiency of translation by recycling ribosomes from one round of translation to another. This chain is Ribosome-recycling factor, found in Rhizobium etli (strain CIAT 652).